Reading from the N-terminus, the 342-residue chain is Methylthioribose-1-phosphate isomerase (342 aa).

Substrate is bound by residues 44 to 46 (RGA), R87, and Q194. The Proton donor role is filled by D235. Position 245–246 (245–246 (NK)) interacts with substrate.

This sequence belongs to the eIF-2B alpha/beta/delta subunits family. MtnA subfamily.

The enzyme catalyses 5-(methylsulfanyl)-alpha-D-ribose 1-phosphate = 5-(methylsulfanyl)-D-ribulose 1-phosphate. It functions in the pathway amino-acid biosynthesis; L-methionine biosynthesis via salvage pathway; L-methionine from S-methyl-5-thio-alpha-D-ribose 1-phosphate: step 1/6. Its function is as follows. Catalyzes the interconversion of methylthioribose-1-phosphate (MTR-1-P) into methylthioribulose-1-phosphate (MTRu-1-P). The sequence is that of Methylthioribose-1-phosphate isomerase from Acetivibrio thermocellus (strain ATCC 27405 / DSM 1237 / JCM 9322 / NBRC 103400 / NCIMB 10682 / NRRL B-4536 / VPI 7372) (Clostridium thermocellum).